The following is a 584-amino-acid chain: DNA damage-binding protein 2 (584 aa).

The segment at M1–R87 is disordered. The segment covering R8–G20 has biased composition (basic residues). 2 stretches are compositionally biased toward acidic residues: residues P25–Q35 and D45–A66. The CCHC-type zinc finger occupies K122–H140. 7 WD repeats span residues F192–T232, V236–N278, S288–D327, K333–A373, A378–P418, E438–V481, and P484–E523. The DWD box motif lies at L351–R366. Basic and acidic residues predominate over residues T517–E532. The tract at residues T517–V584 is disordered. Positions K562–V584 are enriched in basic residues.

The protein belongs to the WD repeat DDB2/WDR76 family. In terms of assembly, component of the UV-DDB complex, which is composed of DDB1 and DDB2. In terms of tissue distribution, expressed in proliferating tissues such as shoot apical meristem (SAM), root tips and young leaves. Not detected in mature leaves.

It localises to the nucleus. In terms of biological role, required for DNA repair. Binds to DDB1 to form the UV-damaged DNA-binding protein complex (the UV-DDB complex). The UV-DDB complex may recognize UV-induced DNA damage and recruit proteins of the nucleotide excision repair pathway (the NER pathway) to initiate DNA repair. May function as the substrate recognition module for a DCX (DDB1-CUL4-X-box) E3 ubiquitin-protein ligase complex. In Oryza sativa subsp. japonica (Rice), this protein is DNA damage-binding protein 2.